We begin with the raw amino-acid sequence, 311 residues long: Ribose-phosphate pyrophosphokinase (311 aa).

Residues 37-39 and 96-97 contribute to the ATP site; these read DGE and RQ. The Mg(2+) site is built by His-130 and Asp-170. Residue Lys-193 is part of the active site. Residues Arg-195, Asp-219, and 223–227 each bind D-ribose 5-phosphate; that span reads DTAGT.

The protein belongs to the ribose-phosphate pyrophosphokinase family. Class I subfamily. Homohexamer. The cofactor is Mg(2+).

Its subcellular location is the cytoplasm. It carries out the reaction D-ribose 5-phosphate + ATP = 5-phospho-alpha-D-ribose 1-diphosphate + AMP + H(+). Its pathway is metabolic intermediate biosynthesis; 5-phospho-alpha-D-ribose 1-diphosphate biosynthesis; 5-phospho-alpha-D-ribose 1-diphosphate from D-ribose 5-phosphate (route I): step 1/1. Involved in the biosynthesis of the central metabolite phospho-alpha-D-ribosyl-1-pyrophosphate (PRPP) via the transfer of pyrophosphoryl group from ATP to 1-hydroxyl of ribose-5-phosphate (Rib-5-P). This is Ribose-phosphate pyrophosphokinase from Aquifex aeolicus (strain VF5).